The following is a 313-amino-acid chain: Malate dehydrogenase (313 aa).

NAD(+) contacts are provided by residues G11–G16 and D35. Substrate contacts are provided by R84 and R90. Residues N97 and V120–N122 each bind NAD(+). 2 residues coordinate substrate: N122 and R153. H177 (proton acceptor) is an active-site residue.

The protein belongs to the LDH/MDH superfamily. MDH type 3 family.

It carries out the reaction (S)-malate + NAD(+) = oxaloacetate + NADH + H(+). Catalyzes the reversible oxidation of malate to oxaloacetate. In Ehrlichia chaffeensis (strain ATCC CRL-10679 / Arkansas), this protein is Malate dehydrogenase.